The chain runs to 320 residues: Ferrochelatase (320 aa).

Fe cation contacts are provided by His194 and Glu275.

The protein belongs to the ferrochelatase family. In terms of assembly, monomer.

The protein localises to the cytoplasm. The catalysed reaction is heme b + 2 H(+) = protoporphyrin IX + Fe(2+). It functions in the pathway porphyrin-containing compound metabolism; protoheme biosynthesis; protoheme from protoporphyrin-IX: step 1/1. Functionally, catalyzes the ferrous insertion into protoporphyrin IX. This is Ferrochelatase from Salmonella paratyphi A (strain ATCC 9150 / SARB42).